The sequence spans 135 residues: Large ribosomal subunit protein uL16c (135 aa).

This sequence belongs to the universal ribosomal protein uL16 family. Part of the 50S ribosomal subunit.

Its subcellular location is the plastid. The protein resides in the chloroplast. In Eucalyptus globulus subsp. globulus (Tasmanian blue gum), this protein is Large ribosomal subunit protein uL16c.